The following is a 483-amino-acid chain: Glutamyl-tRNA(Gln) amidotransferase subunit A (483 aa).

Residues lysine 77 and serine 152 each act as charge relay system in the active site. Serine 176 functions as the Acyl-ester intermediate in the catalytic mechanism.

The protein belongs to the amidase family. GatA subfamily. In terms of assembly, heterotrimer of A, B and C subunits.

The enzyme catalyses L-glutamyl-tRNA(Gln) + L-glutamine + ATP + H2O = L-glutaminyl-tRNA(Gln) + L-glutamate + ADP + phosphate + H(+). Allows the formation of correctly charged Gln-tRNA(Gln) through the transamidation of misacylated Glu-tRNA(Gln) in organisms which lack glutaminyl-tRNA synthetase. The reaction takes place in the presence of glutamine and ATP through an activated gamma-phospho-Glu-tRNA(Gln). In Listeria welshimeri serovar 6b (strain ATCC 35897 / DSM 20650 / CCUG 15529 / CIP 8149 / NCTC 11857 / SLCC 5334 / V8), this protein is Glutamyl-tRNA(Gln) amidotransferase subunit A.